The following is a 136-amino-acid chain: Histone H3.1 (136 aa).

A disordered region spans residues 1–41 (MARTKQTARKSTGGKAPRKQLATKAARKSAPAAGGVKKPHR). Lys5 is modified (N6,N6,N6-trimethyllysine; alternate). Lys5 is subject to N6,N6-dimethyllysine; alternate. Lys5 and Lys10 each carry N6-methyllysine; alternate. Lys10 bears the N6-acetyllysine; alternate mark. Ser11 is subject to Phosphoserine. Lys15 bears the N6,N6-dimethyllysine; alternate mark. An N6-acetyllysine; alternate mark is found at Lys15, Lys19, Lys24, Lys28, and Lys37. 4 positions are modified to N6-methyllysine; alternate: Lys19, Lys24, Lys28, and Lys37. The span at 22–33 (ATKAARKSAPAA) shows a compositional bias: low complexity. Residues Lys28 and Lys37 each carry the N6,N6,N6-trimethyllysine; alternate modification. An N6,N6-dimethyllysine; alternate mark is found at Lys28 and Lys37. 2 positions are modified to N6-acetyllysine: Lys57 and Lys65. Lys80 is modified (N6,N6,N6-trimethyllysine; alternate). Lys80 bears the N6,N6-dimethyllysine; alternate mark. N6-methyllysine; alternate is present on Lys80.

The protein belongs to the histone H3 family. In terms of assembly, the nucleosome is a histone octamer containing two molecules each of H2A, H2B, H3 and H4 assembled in one H3-H4 heterotetramer and two H2A-H2B heterodimers. The octamer wraps approximately 147 bp of DNA. Phosphorylated to form H3S10ph. H3S10ph promotes subsequent H3K14ac formation and is required for transcriptional activation through TBP recruitment to the promoters. Post-translationally, mono-, di- and trimethylated by the COMPASS complex to form H3K4me1/2/3. H3K4me activates gene expression by regulating transcription elongation and plays a role in telomere length maintenance. H3K4me enrichment correlates with transcription levels, and occurs in a 5' to 3' gradient with H3K4me3 enrichment at the 5'-end of genes, shifting to H3K4me2 and then H3K4me1. Methylated by SET2 to form H3K36me. H3K36me represses gene expression. Methylated by DOT1 to form H3K79me. H3K79me is required for association of SIR proteins with telomeric regions and for telomeric silencing. The COMPASS-mediated formation of H3K4me2/3 and the DOT1-mediated formation of H3K79me require H2BK123ub1. In terms of processing, acetylation of histone H3 leads to transcriptional activation. H3K14ac formation by GCN5 is promoted by H3S10ph. H3K14ac can also be formed by ESA1. H3K56ac formation occurs predominantly in newly synthesized H3 molecules during G1, S and G2/M of the cell cycle and may be involved in DNA repair.

It is found in the nucleus. The protein resides in the chromosome. Its function is as follows. Core component of nucleosome. Nucleosomes wrap and compact DNA into chromatin, limiting DNA accessibility to the cellular machineries which require DNA as a template. Histones thereby play a central role in transcription regulation, DNA repair, DNA replication and chromosomal stability. DNA accessibility is regulated via a complex set of post-translational modifications of histones, also called histone code, and nucleosome remodeling. The protein is Histone H3.1 (HHT1) of Mycosarcoma maydis (Corn smut fungus).